The sequence spans 510 residues: GMP synthase [glutamine-hydrolyzing] (510 aa).

A Glutamine amidotransferase type-1 domain is found at 5 to 195 (MIVVLDFGSQ…VFEVCGCRGD (191 aa)). Cysteine 82 acts as the Nucleophile in catalysis. Residues histidine 169 and glutamate 171 contribute to the active site. Residues 196-385 (WTMENFIDEQ…LGIPDEIVWR (190 aa)) form the GMPS ATP-PPase domain. ATP is bound at residue 223–229 (SGGVDSS).

In terms of assembly, homodimer.

It catalyses the reaction XMP + L-glutamine + ATP + H2O = GMP + L-glutamate + AMP + diphosphate + 2 H(+). It functions in the pathway purine metabolism; GMP biosynthesis; GMP from XMP (L-Gln route): step 1/1. Its function is as follows. Catalyzes the synthesis of GMP from XMP. In Geobacillus kaustophilus (strain HTA426), this protein is GMP synthase [glutamine-hydrolyzing].